Consider the following 147-residue polypeptide: Hemoglobin subunit epsilon-Y2 (147 aa).

In terms of domain architecture, Globin spans 3-147; that stretch reads NFTAEEKTLI…VATALSHKYH (145 aa). Residue serine 51 is modified to Phosphoserine. Positions 64 and 93 each coordinate heme b.

This sequence belongs to the globin family. As to expression, high expression in yolk sac blood islands, fetal liver, and embryonic erythrocytes. Very low levels in adult liver and spleen.

In terms of biological role, hemoglobin epsilon chain is a beta-type chain found in early embryos. The sequence is that of Hemoglobin subunit epsilon-Y2 (Hbb-y) from Mus musculus (Mouse).